A 118-amino-acid polypeptide reads, in one-letter code: Putative pterin-4-alpha-carbinolamine dehydratase (118 aa).

It belongs to the pterin-4-alpha-carbinolamine dehydratase family.

The catalysed reaction is (4aS,6R)-4a-hydroxy-L-erythro-5,6,7,8-tetrahydrobiopterin = (6R)-L-erythro-6,7-dihydrobiopterin + H2O. This is Putative pterin-4-alpha-carbinolamine dehydratase from Pseudomonas savastanoi pv. phaseolicola (strain 1448A / Race 6) (Pseudomonas syringae pv. phaseolicola (strain 1448A / Race 6)).